A 943-amino-acid chain; its full sequence is Isoleucine--tRNA ligase (943 aa).

The 'HIGH' region signature appears at Pro58 to His68. Glu567 lines the L-isoleucyl-5'-AMP pocket. The 'KMSKS' region signature appears at Lys608–Ser612. Lys611 provides a ligand contact to ATP. Zn(2+) is bound by residues Cys906, Cys909, Cys926, and Cys929.

Belongs to the class-I aminoacyl-tRNA synthetase family. IleS type 1 subfamily. As to quaternary structure, monomer. Requires Zn(2+) as cofactor.

It localises to the cytoplasm. It carries out the reaction tRNA(Ile) + L-isoleucine + ATP = L-isoleucyl-tRNA(Ile) + AMP + diphosphate. In terms of biological role, catalyzes the attachment of isoleucine to tRNA(Ile). As IleRS can inadvertently accommodate and process structurally similar amino acids such as valine, to avoid such errors it has two additional distinct tRNA(Ile)-dependent editing activities. One activity is designated as 'pretransfer' editing and involves the hydrolysis of activated Val-AMP. The other activity is designated 'posttransfer' editing and involves deacylation of mischarged Val-tRNA(Ile). The protein is Isoleucine--tRNA ligase of Pseudomonas aeruginosa (strain LESB58).